The primary structure comprises 179 residues: Apoptosis regulator DPV022 (179 aa).

The chain crosses the membrane as a helical span at residues 148–170 (VLITNYLKITIFGAILGITAYYI).

As to quaternary structure, interacts with host BAX and BAK1.

It is found in the host mitochondrion. It localises to the host membrane. Its function is as follows. Plays a role in the inhibition of host apoptosis by sequestering and inactivating several proapoptotic BCL-2 proteins, including BAK1 and BAX. Prevents the conformational activation of both of them. The sequence is that of Apoptosis regulator DPV022 (DPV022) from Deerpox virus (strain Mule deer/United States/W-848-83/1983) (DPV).